We begin with the raw amino-acid sequence, 227 residues long: DNA repair protein RecO (227 aa).

It belongs to the RecO family.

Its function is as follows. Involved in DNA repair and RecF pathway recombination. This Pseudomonas putida (strain GB-1) protein is DNA repair protein RecO.